A 447-amino-acid chain; its full sequence is Exodeoxyribonuclease 7 large subunit (447 aa).

The protein belongs to the XseA family. Heterooligomer composed of large and small subunits.

It is found in the cytoplasm. The enzyme catalyses Exonucleolytic cleavage in either 5'- to 3'- or 3'- to 5'-direction to yield nucleoside 5'-phosphates.. In terms of biological role, bidirectionally degrades single-stranded DNA into large acid-insoluble oligonucleotides, which are then degraded further into small acid-soluble oligonucleotides. The sequence is that of Exodeoxyribonuclease 7 large subunit from Lactobacillus helveticus (strain DPC 4571).